We begin with the raw amino-acid sequence, 36 residues long: Potassium channel toxin alpha-KTx 16.9 (36 aa).

Cystine bridges form between Cys-7–Cys-28, Cys-13–Cys-33, and Cys-17–Cys-35.

Belongs to the short scorpion toxin superfamily. Potassium channel inhibitor family. Alpha-KTx 16 subfamily. As to expression, expressed by the venom gland.

It is found in the secreted. Its function is as follows. Poorly competes with (125)I-kaliotoxin binding on rat brain synaptosome (IC(50)&gt;100 nM). Is a poor Kv1.3/KCNA3 ligand. May have as real target KCa1.1/KCNMA1 channel. Shows weak toxicity on mice. This chain is Potassium channel toxin alpha-KTx 16.9, found in Buthus paris (Scorpion).